The following is a 417-amino-acid chain: BSD domain-containing protein 1-B (417 aa).

A BSD domain is found at 153 to 205 (WLAYWDPEQRKAEISEPLVTSPSIRALFTKMVPAAVSHSEFWQRYFYKVHQLE). Disordered regions lie at residues 215 to 234 (KQRA…EEEE), 262 to 292 (HVED…SISP), and 323 to 390 (AAET…DFDM). A compositionally biased stretch (basic and acidic residues) spans 262-278 (HVEDKSEKTAELNRDHT). The segment covering 281–292 (TSPSESSESISP) has biased composition (low complexity). Residues 332 to 343 (PVEQTGKSNAQM) are compositionally biased toward polar residues. Basic and acidic residues predominate over residues 345–356 (THREDPPSDLRV). Polar residues predominate over residues 360-379 (NSDSGKSTPSNNGQKGSSTD). Residues 380 to 390 (VSEDWEKDFDM) show a composition bias toward acidic residues.

The polypeptide is BSD domain-containing protein 1-B (bsdc1-b) (Xenopus laevis (African clawed frog)).